The chain runs to 733 residues: ATP-dependent RNA helicase DBP7 (733 aa).

Disordered regions lie at residues 1–92 and 119–139; these read MDED…SKMI and SSQL…SNAP. A compositionally biased stretch (polar residues) spans 17 to 30; it reads SVSSGSNKRTTSKV. A compositionally biased stretch (basic and acidic residues) spans 52-80; that stretch reads QKKDRSATGKDDGKKHENDESNDSKKRPT. A Q motif motif is present at residues 144-173; sequence STFEGLGINERLSKHLTETLRFKNPTKVQK. Residues 177–372 enclose the Helicase ATP-binding domain; the sequence is PTMLSTERDL…SIILNNPEMI (196 aa). An ATP-binding site is contributed by 190 to 197; sequence AQTGSGKT. Residues 304-307 carry the DEAD box motif; sequence DEGD. In terms of domain architecture, Helicase C-terminal spans 406–596; that stretch reads TLSAILKKIS…NYENYLKDGF (191 aa). Positions 687 to 714 are disordered; that stretch reads KKLGKSVESNSGIQGASKKTKKEDPRKK.

Belongs to the DEAD box helicase family. DDX31/DBP7 subfamily.

It localises to the nucleus. The protein localises to the nucleolus. It carries out the reaction ATP + H2O = ADP + phosphate + H(+). In terms of biological role, ATP-binding RNA helicase involved in the biogenesis of 60S ribosomal subunits and is required for the normal formation of 25S and 5.8S rRNAs. This chain is ATP-dependent RNA helicase DBP7 (DPB7), found in Scheffersomyces stipitis (strain ATCC 58785 / CBS 6054 / NBRC 10063 / NRRL Y-11545) (Yeast).